The primary structure comprises 518 residues: Xaa-Pro aminopeptidase 3 (518 aa).

The transit peptide at 1–48 (MNNICKLNKFIISKSSSSLSSTSSKIKTNCLIKNAKMFSSSLNLNRFY) directs the protein to the mitochondrion. Tyr-314, Asp-345, Asp-356, His-434, His-441, Glu-461, and Glu-485 together coordinate substrate. Mn(2+)-binding residues include Asp-345, Asp-356, and His-434. Mn(2+) is bound by residues Glu-461 and Glu-485.

Belongs to the peptidase M24B family. Homodimer. It depends on Mn(2+) as a cofactor.

The protein localises to the mitochondrion. The protein resides in the cytoplasm. The catalysed reaction is Release of any N-terminal amino acid, including proline, that is linked to proline, even from a dipeptide or tripeptide.. Its function is as follows. Catalyzes the removal of a penultimate prolyl residue from the N-termini of peptides, such as Leu-Pro-Ala. Also shows low activity towards peptides with Ala or Ser at the P1 position. The chain is Xaa-Pro aminopeptidase 3 (xpnpep3) from Dictyostelium discoideum (Social amoeba).